Reading from the N-terminus, the 476-residue chain is MKPVLPDYSKAGVLIVGDVMLDRYWYGPTGRISPEAPVPVVKVEQSEERPGGAANVAMNIASLGGHAHIIGLTGQDEPANVLANKLTSLKVHCDFVALPDYPTITKLRVLSRGQQLIRLDFEDKFENTDAQLILSRMESALPKVRAVILSDYAKGALEHVQQFIQKAKAAGVPVFIDPKGSDFERYRGASLLTPNMSEFEAVVGKVKSEQELVEKGFALIEKFDLGALLVTRSEHGMTLLRRGLEPFHLPTQAKEVYDVTGAGDTVISVLAASVAAGKALDEACALANAAAGVVVGKLGTSTVSTIELAEAVHGSKDTDYGVISEDALIEAVKKAQARGEKVVMTNGCFDILHAGHVSYLNHAAELGDRLIVAVNTDESVKRLKGPGRPVNSTDRRMAVLAGLGAVDWVVPFSEDTPQRLIAAVLPNLLVKGGDYKPEDIAGGKEVIAAGGEVKVLNFEEGCSTTEIIEAIKGGRG.

Positions 1 to 318 are ribokinase; that stretch reads MKPVLPDYSK…AEAVHGSKDT (318 aa). ATP is bound at residue 195-198; sequence NMSE. Aspartate 264 is a catalytic residue. The cytidylyltransferase stretch occupies residues 344–476; sequence MTNGCFDILH…IIEAIKGGRG (133 aa).

It in the N-terminal section; belongs to the carbohydrate kinase PfkB family. In the C-terminal section; belongs to the cytidylyltransferase family. In terms of assembly, homodimer.

The catalysed reaction is D-glycero-beta-D-manno-heptose 7-phosphate + ATP = D-glycero-beta-D-manno-heptose 1,7-bisphosphate + ADP + H(+). The enzyme catalyses D-glycero-beta-D-manno-heptose 1-phosphate + ATP + H(+) = ADP-D-glycero-beta-D-manno-heptose + diphosphate. The protein operates within nucleotide-sugar biosynthesis; ADP-L-glycero-beta-D-manno-heptose biosynthesis; ADP-L-glycero-beta-D-manno-heptose from D-glycero-beta-D-manno-heptose 7-phosphate: step 1/4. It participates in nucleotide-sugar biosynthesis; ADP-L-glycero-beta-D-manno-heptose biosynthesis; ADP-L-glycero-beta-D-manno-heptose from D-glycero-beta-D-manno-heptose 7-phosphate: step 3/4. Catalyzes the phosphorylation of D-glycero-D-manno-heptose 7-phosphate at the C-1 position to selectively form D-glycero-beta-D-manno-heptose-1,7-bisphosphate. Its function is as follows. Catalyzes the ADP transfer from ATP to D-glycero-beta-D-manno-heptose 1-phosphate, yielding ADP-D-glycero-beta-D-manno-heptose. The protein is Bifunctional protein HldE of Vibrio cholerae serotype O1 (strain M66-2).